Here is a 313-residue protein sequence, read N- to C-terminus: Olfactory receptor 10Z1 (313 aa).

The Extracellular portion of the chain corresponds to 1-25; it reads MGQTNVTSWRDFVFLGFSSSGELQL. A glycan (N-linked (GlcNAc...) asparagine) is linked at Asn5. Residues 26 to 46 form a helical membrane-spanning segment; that stretch reads LLFALFLSLYLVTLTSNVFII. Over 47–54 the chain is Cytoplasmic; the sequence is IAIRLDSH. Residues 55 to 75 form a helical membrane-spanning segment; the sequence is LHTPMYLFLSFLSFSETCYTL. At 76–99 the chain is on the extracellular side; the sequence is GIIPRMLSGLAGGDQAISYVGCAA. A disulfide bridge connects residues Cys97 and Cys189. A helical transmembrane segment spans residues 100 to 120; sequence QMFFSASWACTNCFLLAAMGF. The Cytoplasmic segment spans residues 121-139; sequence DRYVAICAPLHYASHMNPT. A helical membrane pass occupies residues 140–160; sequence LCAQLVITSFLTGYLFGLGMT. Over 161 to 197 the chain is Extracellular; that stretch reads LVIFHLSFCSSHEIQHFFCDTPPVLSLACGDTGPSEL. Residues 198–217 traverse the membrane as a helical segment; it reads RIFILSLLVLLVSFFFITIS. Residues 218–237 are Cytoplasmic-facing; sequence YAYILAAILRIPSAEGQKKA. Residues 238–258 traverse the membrane as a helical segment; the sequence is FSTCASHLTVVIIHYGCASFV. Over 259–271 the chain is Extracellular; that stretch reads YLRPKASYSLERD. The helical transmembrane segment at 272-292 threads the bilayer; the sequence is QLIAMTYTVVTPLLNPIVYSL. Residues 293 to 313 are Cytoplasmic-facing; sequence RNRAIQTALRNAFRGRLLGKG.

It belongs to the G-protein coupled receptor 1 family.

The protein localises to the cell membrane. Its function is as follows. Odorant receptor. The chain is Olfactory receptor 10Z1 (OR10Z1) from Homo sapiens (Human).